The sequence spans 419 residues: tRNA modification GTPase MnmE (419 aa).

Positions 2, 59, and 99 each coordinate (6S)-5-formyl-5,6,7,8-tetrahydrofolate. The TrmE-type G domain maps to 197-343 (GLSVVIAGPP…LHTMIVEMAR (147 aa)). Asn-207 serves as a coordination point for K(+). GTP is bound by residues 207–212 (NAGKST), 226–232 (SPVAGTT), and 251–254 (DTAG). Ser-211 is a Mg(2+) binding site. K(+) is bound by residues Ser-226, Val-228, and Thr-231. Residue Thr-232 coordinates Mg(2+). (6S)-5-formyl-5,6,7,8-tetrahydrofolate is bound at residue Lys-419.

This sequence belongs to the TRAFAC class TrmE-Era-EngA-EngB-Septin-like GTPase superfamily. TrmE GTPase family. As to quaternary structure, homodimer. Heterotetramer of two MnmE and two MnmG subunits. K(+) serves as cofactor.

The protein localises to the cytoplasm. In terms of biological role, exhibits a very high intrinsic GTPase hydrolysis rate. Involved in the addition of a carboxymethylaminomethyl (cmnm) group at the wobble position (U34) of certain tRNAs, forming tRNA-cmnm(5)s(2)U34. The polypeptide is tRNA modification GTPase MnmE (Sphingopyxis alaskensis (strain DSM 13593 / LMG 18877 / RB2256) (Sphingomonas alaskensis)).